A 546-amino-acid polypeptide reads, in one-letter code: Aladin (546 aa).

N-acetylcysteine is present on Cys-2. Ser-33 is subject to Phosphoserine. WD repeat units lie at residues 142-180 (EFAQ…VYNA), 183-222 (TIVP…IWTL), 234-274 (GCAQ…VWDV), 280-316 (VPLP…VWEA), 324-380 (WPTL…IVAD), 386-433 (IQTP…LFRT), and 442-482 (LPCG…IAHI). Residues Ser-495, Ser-511, Ser-522, and Ser-525 each carry the phosphoserine modification. The tract at residues 500–546 (RAQEPPAGGGGSIHDLPLFTETSPTSAPWDPLPGPPPVLPHSPHSHL) is disordered. Residues 529–539 (DPLPGPPPVLP) are compositionally biased toward pro residues. Ser-541 carries the post-translational modification Phosphoserine. Residues 544–546 (SHL) carry the Microbody targeting signal motif.

As to quaternary structure, interacts with NDC1, the interaction is required for nuclear pore localization. Interacts with the inactive form aurora kinase AURKA. Interacts with PGRMC2. As to expression, widely expressed. Particularly abundant in cerebellum, corpus callosum, adrenal gland, pituitary gland, gastrointestinal structures and fetal lung.

It is found in the nucleus. It localises to the nuclear pore complex. Its subcellular location is the cytoplasm. The protein localises to the cytoskeleton. The protein resides in the spindle pole. It is found in the nucleus envelope. In terms of biological role, plays a role in the normal development of the peripheral and central nervous system. Required for the correct localization of aurora kinase AURKA and the microtubule minus end-binding protein NUMA1 as well as a subset of AURKA targets which ensures proper spindle formation and timely chromosome alignment. In Homo sapiens (Human), this protein is Aladin (AAAS).